Reading from the N-terminus, the 810-residue chain is Leucine--tRNA ligase (810 aa).

The 'HIGH' region motif lies at 43 to 53 (PYPSGTLHIGH). A 'KMSKS' region motif is present at residues 578-582 (KMSKS). K581 contacts ATP.

The protein belongs to the class-I aminoacyl-tRNA synthetase family.

It is found in the cytoplasm. It catalyses the reaction tRNA(Leu) + L-leucine + ATP = L-leucyl-tRNA(Leu) + AMP + diphosphate. The sequence is that of Leucine--tRNA ligase from Solibacter usitatus (strain Ellin6076).